The sequence spans 377 residues: Nitric oxide reductase FlRd-NAD(+) reductase (377 aa).

It belongs to the FAD-dependent oxidoreductase family. The cofactor is FAD.

Its subcellular location is the cytoplasm. The catalysed reaction is 2 reduced [nitric oxide reductase rubredoxin domain] + NAD(+) + H(+) = 2 oxidized [nitric oxide reductase rubredoxin domain] + NADH. It functions in the pathway nitrogen metabolism; nitric oxide reduction. One of at least two accessory proteins for anaerobic nitric oxide (NO) reductase. Reduces the rubredoxin moiety of NO reductase. In Escherichia coli (strain 55989 / EAEC), this protein is Nitric oxide reductase FlRd-NAD(+) reductase.